The primary structure comprises 632 residues: Chaperone protein HtpG (632 aa).

An a; substrate-binding region spans residues Met-1–Arg-339. The interval Glu-340–Arg-559 is b. The tract at residues Met-560–Ala-632 is c.

The protein belongs to the heat shock protein 90 family. Homodimer.

It localises to the cytoplasm. Molecular chaperone. Has ATPase activity. The polypeptide is Chaperone protein HtpG (Burkholderia thailandensis (strain ATCC 700388 / DSM 13276 / CCUG 48851 / CIP 106301 / E264)).